A 277-amino-acid chain; its full sequence is 3-methyl-2-oxobutanoate hydroxymethyltransferase (277 aa).

Positions 53 and 96 each coordinate Mg(2+). Residues 53–54, aspartate 96, and lysine 126 each bind 3-methyl-2-oxobutanoate; that span reads DS. Glutamate 128 serves as a coordination point for Mg(2+). Glutamate 195 acts as the Proton acceptor in catalysis.

The protein belongs to the PanB family. As to quaternary structure, homodecamer; pentamer of dimers. It depends on Mg(2+) as a cofactor.

Its subcellular location is the cytoplasm. It carries out the reaction 3-methyl-2-oxobutanoate + (6R)-5,10-methylene-5,6,7,8-tetrahydrofolate + H2O = 2-dehydropantoate + (6S)-5,6,7,8-tetrahydrofolate. It participates in cofactor biosynthesis; (R)-pantothenate biosynthesis; (R)-pantoate from 3-methyl-2-oxobutanoate: step 1/2. Functionally, catalyzes the reversible reaction in which hydroxymethyl group from 5,10-methylenetetrahydrofolate is transferred onto alpha-ketoisovalerate to form ketopantoate. The chain is 3-methyl-2-oxobutanoate hydroxymethyltransferase from Pelodictyon phaeoclathratiforme (strain DSM 5477 / BU-1).